The sequence spans 249 residues: Triosephosphate isomerase (249 aa).

Residues Asn12 and Lys14 each coordinate substrate. Lys14 carries the N6-acetyllysine modification. At Tyr68 the chain carries 3'-nitrotyrosine. Phosphoserine is present on Ser80. Residue His96 is the Electrophile of the active site. A Phosphoserine modification is found at Ser106. A Glycyl lysine isopeptide (Lys-Gly) (interchain with G-Cter in SUMO1) cross-link involves residue Lys142. Lys149 bears the N6-succinyllysine mark. Lys156 is modified (N6-acetyllysine; alternate). At Lys156 the chain carries N6-succinyllysine; alternate. The active-site Proton acceptor is the Glu166. At Thr173 the chain carries Phosphothreonine. Position 194 is an N6-acetyllysine; alternate (Lys194). Lys194 carries the post-translational modification N6-succinyllysine; alternate. Lys194 bears the N6-methyllysine; alternate mark. Ser198 is modified (phosphoserine). Position 209 is a 3'-nitrotyrosine (Tyr209). Position 212 is a phosphoserine (Ser212). Thr214 carries the phosphothreonine modification. Ser223 is modified (phosphoserine). N6-acetyllysine is present on Lys238.

Belongs to the triosephosphate isomerase family. Homodimer.

It is found in the cytoplasm. It catalyses the reaction dihydroxyacetone phosphate = methylglyoxal + phosphate. The catalysed reaction is D-glyceraldehyde 3-phosphate = dihydroxyacetone phosphate. It participates in carbohydrate degradation; glycolysis; D-glyceraldehyde 3-phosphate from glycerone phosphate: step 1/1. Its pathway is carbohydrate biosynthesis; gluconeogenesis. Functionally, triosephosphate isomerase is an extremely efficient metabolic enzyme that catalyzes the interconversion between dihydroxyacetone phosphate (DHAP) and D-glyceraldehyde-3-phosphate (G3P) in glycolysis and gluconeogenesis. Its function is as follows. It is also responsible for the non-negligible production of methylglyoxal a reactive cytotoxic side-product that modifies and can alter proteins, DNA and lipids. The sequence is that of Triosephosphate isomerase (Tpi1) from Rattus norvegicus (Rat).